The chain runs to 631 residues: Probable protein phosphatase 2C 31 (631 aa).

Disordered stretches follow at residues 119 to 142 (GPLH…SDRF) and 205 to 231 (LSGR…PKGN). Residues 131–140 (ASGSASTASD) are compositionally biased toward polar residues. Residues 221 to 622 (DGDYRSTPKG…DDVSIIVMSF (402 aa)) enclose the PPM-type phosphatase domain. Mn(2+) contacts are provided by Asp-261 and Gly-262. The tract at residues 324–347 (GGDDDPDAERKAKRGRIERNADDD) is disordered. Asp-550 and Asp-613 together coordinate Mn(2+).

It belongs to the PP2C family. The cofactor is Mg(2+). Mn(2+) serves as cofactor.

It carries out the reaction O-phospho-L-seryl-[protein] + H2O = L-seryl-[protein] + phosphate. The catalysed reaction is O-phospho-L-threonyl-[protein] + H2O = L-threonyl-[protein] + phosphate. In Oryza sativa subsp. japonica (Rice), this protein is Probable protein phosphatase 2C 31.